Here is a 430-residue protein sequence, read N- to C-terminus: Ribulose bisphosphate carboxylase (430 aa).

Residue Lys160 is the Proton acceptor of the active site. Position 162 (Lys162) interacts with substrate. 3 residues coordinate Mg(2+): Lys186, Asp188, and Glu189. The residue at position 186 (Lys186) is an N6-carboxylysine. Residue His278 is the Proton acceptor of the active site. Residues Arg279, His311, 348 to 350 (SGG), and 370 to 373 (QAGG) each bind substrate.

Belongs to the RuBisCO large chain family. Type III subfamily. As to quaternary structure, homodimer or homodecamer. In contrast to form I RuBisCO, the form III RuBisCO is composed solely of large subunits. Mg(2+) is required as a cofactor.

It catalyses the reaction 2 (2R)-3-phosphoglycerate + 2 H(+) = D-ribulose 1,5-bisphosphate + CO2 + H2O. The catalysed reaction is D-ribulose 1,5-bisphosphate + O2 = 2-phosphoglycolate + (2R)-3-phosphoglycerate + 2 H(+). Its function is as follows. Catalyzes the addition of molecular CO(2) and H(2)O to ribulose 1,5-bisphosphate (RuBP), generating two molecules of 3-phosphoglycerate (3-PGA). Functions in an archaeal AMP degradation pathway, together with AMP phosphorylase and R15P isomerase. The protein is Ribulose bisphosphate carboxylase of Pyrococcus horikoshii (strain ATCC 700860 / DSM 12428 / JCM 9974 / NBRC 100139 / OT-3).